Here is a 1175-residue protein sequence, read N- to C-terminus: Chromosome partition protein Smc (1175 aa).

Residue 32–39 coordinates ATP; sequence PNGCGKSN. Residues 170–504 adopt a coiled-coil conformation; sequence VSKYKERRRE…ALKALQEKVK (335 aa). The SMC hinge domain occupies 524–625; it reads LWSRIAIEPG…YTAPTLEEAL (102 aa). 2 coiled-coil regions span residues 684–918 and 944–1022; these read DESR…FQLK and SQSI…ELLS. The segment at 807–849 is disordered; it reads RQAQEATFSRRSLEARRGELSRTIETASQQARSLADEQQRAQD. Residues 817 to 828 are compositionally biased toward basic and acidic residues; that stretch reads RSLEARRGELSR. The span at 829–838 shows a compositional bias: polar residues; the sequence is TIETASQQAR. Residues 840–849 show a composition bias toward basic and acidic residues; sequence LADEQQRAQD.

This sequence belongs to the SMC family. In terms of assembly, homodimer.

It is found in the cytoplasm. In terms of biological role, required for chromosome condensation and partitioning. This chain is Chromosome partition protein Smc, found in Delftia acidovorans (strain DSM 14801 / SPH-1).